The sequence spans 494 residues: Probable cytosol aminopeptidase (494 aa).

Positions 260 and 265 each coordinate Mn(2+). The active site involves Lys-272. Mn(2+) contacts are provided by Asp-283, Asp-342, and Glu-344. Residue Arg-346 is part of the active site.

It belongs to the peptidase M17 family. Mn(2+) serves as cofactor.

The protein resides in the cytoplasm. The enzyme catalyses Release of an N-terminal amino acid, Xaa-|-Yaa-, in which Xaa is preferably Leu, but may be other amino acids including Pro although not Arg or Lys, and Yaa may be Pro. Amino acid amides and methyl esters are also readily hydrolyzed, but rates on arylamides are exceedingly low.. The catalysed reaction is Release of an N-terminal amino acid, preferentially leucine, but not glutamic or aspartic acids.. Its function is as follows. Presumably involved in the processing and regular turnover of intracellular proteins. Catalyzes the removal of unsubstituted N-terminal amino acids from various peptides. This Bacillus cereus (strain ZK / E33L) protein is Probable cytosol aminopeptidase.